The chain runs to 611 residues: Protein Pixie (611 aa).

4Fe-4S ferredoxin-type domains follow at residues 15–45 (RIAIVSDDKCKPKRCRQECKKTCPVVRMGKL) and 54–83 (KIASLSEELCIGCGICVKKCPFEAITIINL). ABC transporter domains lie at 78–323 (ITII…FLDG) and 350–570 (IKRM…LELL). Residues 118–125 (GQNGIGKS) and 387–394 (GENGTGKT) contribute to the ATP site.

The protein belongs to the ABC transporter superfamily. ABCE family. Interacts with components of eIF3 complex, namely eIF3a, eIF3j, eIF3b, eIF3c and eIF3i. Associates with the 40S ribosome subunit in an ATP-dependent manner and independently from the presence of the eIF3 complex. Forms a complex with Git and Pak; the interaction with Pak may be mediated by pix/dPIX. Ubiquitinated by Cnot4. Ubiquitination mediates the recruitment of autophagy receptors to the mitochondrial outer membrane and initiates mitophagy. Expressed in early and late larval imaginal disks (at protein level).

The protein resides in the cytoplasm. In terms of biological role, plays a role in translation initiation and quality control of translation. Together with pelo and HBS1, is required for 48S complex formation from 80S ribosomes and dissociation of vacant 80S ribosomes. Stabilizes core components of eIF3 complex promoting their assembly into translation initiation-competent complexes. Together with pelo and HBS1, recognizes stalled ribosomes and promotes dissociation of elongation complexes assembled on non-stop mRNAs; this triggers endonucleolytic cleavage of the mRNA, a mechanism to release non-functional ribosomes and to degrade damaged mRNAs as part of the No-Go Decay (NGD) pathway. Plays a role in the regulation of mRNA turnover. Plays a role in quality control of translation of mitochondrial outer membrane-localized mRNA. As part of the Pink1-regulated signaling, ubiquitinated by Cnot4 upon mitochondria damage; this modification generates polyubiquitin signals that recruits autophagy receptors to the mitochondrial outer membrane to initiate mitophagy. Required in the wing disk for cell division and growth as well as cell survival. During muscle embryogenesis, required for the recruitment of Pak to muscle attachments in the embryo, hence may play a role in proper muscle morphogenesis and proper guidance and targeting of subsets of myotubes. The protein is Protein Pixie of Drosophila melanogaster (Fruit fly).